A 151-amino-acid polypeptide reads, in one-letter code: 3-hydroxyacyl-[acyl-carrier-protein] dehydratase FabZ (151 aa).

His-56 is a catalytic residue.

Belongs to the thioester dehydratase family. FabZ subfamily.

The protein localises to the cytoplasm. It carries out the reaction a (3R)-hydroxyacyl-[ACP] = a (2E)-enoyl-[ACP] + H2O. Its function is as follows. Involved in unsaturated fatty acids biosynthesis. Catalyzes the dehydration of short chain beta-hydroxyacyl-ACPs and long chain saturated and unsaturated beta-hydroxyacyl-ACPs. The chain is 3-hydroxyacyl-[acyl-carrier-protein] dehydratase FabZ from Rhodopseudomonas palustris (strain ATCC BAA-98 / CGA009).